Consider the following 574-residue polypeptide: uncharacterized protein (574 aa).

The disordered stretch occupies residues 297-317 (SAASKPRKRKKDEVSGAQVNS).

This is an uncharacterized protein from Mus musculus (Mouse).